The following is a 336-amino-acid chain: Probable tRNA pseudouridine synthase B (336 aa).

Aspartate 81 functions as the Nucleophile in the catalytic mechanism. The PUA domain maps to 248–323 (LKKVVVKDSA…VAVDVERVYM (76 aa)).

Belongs to the pseudouridine synthase TruB family. Type 2 subfamily.

It catalyses the reaction uridine(55) in tRNA = pseudouridine(55) in tRNA. In terms of biological role, could be responsible for synthesis of pseudouridine from uracil-55 in the psi GC loop of transfer RNAs. The chain is Probable tRNA pseudouridine synthase B from Methanocaldococcus jannaschii (strain ATCC 43067 / DSM 2661 / JAL-1 / JCM 10045 / NBRC 100440) (Methanococcus jannaschii).